A 472-amino-acid chain; its full sequence is Eukaryotic translation initiation factor 2 subunit 3 (472 aa).

Residue alanine 2 is modified to N-acetylalanine; partial. Residues 39–247 enclose the tr-type G domain; the sequence is QATINIGTIG…YIVKKIPVPL (209 aa). The tract at residues 48–55 is G1; sequence GHVAHGKS. A GTP-binding site is contributed by 51 to 56; it reads AHGKST. The tract at residues 76 to 80 is G2; that stretch reads NITIK. Residues 134–137 are G3; sequence DCPG. Residues 190–193 and 225–227 contribute to the GTP site; these read NKID and SAQ. The G4 stretch occupies residues 190 to 193; that stretch reads NKID. Residues 225-227 are G5; sequence SAQ. Positions 457-469 are interacts with CDC123; sequence GQIRRGVTIKPTV.

This sequence belongs to the TRAFAC class translation factor GTPase superfamily. Classic translation factor GTPase family. EIF2G subfamily. In terms of assembly, eukaryotic translation initiation factor 2 eIF2 is a heterotrimeric complex composed of an alpha (EIF2S1), a beta (EIF2S2) and a gamma (EIF2S3) chain. eIF2 is member of the 43S pre-initiation complex (43S PIC).

The protein resides in the cytoplasm. It localises to the cytosol. It catalyses the reaction GTP + H2O = GDP + phosphate + H(+). Its function is as follows. Member of the eIF2 complex that functions in the early steps of protein synthesis by forming a ternary complex with GTP and initiator tRNA. This complex binds to a 40S ribosomal subunit, followed by mRNA binding to form the 43S pre-initiation complex (43S PIC). Junction of the 60S ribosomal subunit to form the 80S initiation complex is preceded by hydrolysis of the GTP bound to eIF2 and release of an eIF2-GDP binary complex. In order for eIF2 to recycle and catalyze another round of initiation, the GDP bound to eIF2 must exchange with GTP by way of a reaction catalyzed by eIF-2B. The sequence is that of Eukaryotic translation initiation factor 2 subunit 3 (EIF2S3) from Gallus gallus (Chicken).